The chain runs to 664 residues: Phosphomethylpyrimidine synthase (664 aa).

2 stretches are compositionally biased toward polar residues: residues 1–10 (MSTEPLSINP) and 17–27 (SATQEPSTSSK). The tract at residues 1-37 (MSTEPLSINPLSAKPLSATQEPSTSSKPSRREQRAAA) is disordered. Residues N261, M290, Y319, H355, 375–377 (SRG), 416–419 (DGLR), and E455 contribute to the substrate site. A Zn(2+)-binding site is contributed by H459. Y482 lines the substrate pocket. Residue H523 participates in Zn(2+) binding. C603, C606, and C611 together coordinate [4Fe-4S] cluster.

It belongs to the ThiC family. Homodimer. [4Fe-4S] cluster is required as a cofactor.

It carries out the reaction 5-amino-1-(5-phospho-beta-D-ribosyl)imidazole + S-adenosyl-L-methionine = 4-amino-2-methyl-5-(phosphooxymethyl)pyrimidine + CO + 5'-deoxyadenosine + formate + L-methionine + 3 H(+). It functions in the pathway cofactor biosynthesis; thiamine diphosphate biosynthesis. Its function is as follows. Catalyzes the synthesis of the hydroxymethylpyrimidine phosphate (HMP-P) moiety of thiamine from aminoimidazole ribotide (AIR) in a radical S-adenosyl-L-methionine (SAM)-dependent reaction. The protein is Phosphomethylpyrimidine synthase of Pectobacterium atrosepticum (strain SCRI 1043 / ATCC BAA-672) (Erwinia carotovora subsp. atroseptica).